Reading from the N-terminus, the 392-residue chain is [Phe13]-bombesin receptor (392 aa).

The Extracellular segment spans residues 1 to 40 (MPEGFQSLNQTLPSAISSIAHLESLNDSFILGAKQSEDVS). N-linked (GlcNAc...) asparagine glycans are attached at residues Asn-9 and Asn-26. The chain crosses the membrane as a helical span at residues 41 to 62 (PGLEILALISVTYAVIISVGIL). The Cytoplasmic portion of the chain corresponds to 63 to 81 (GNTILIKVFFKIKSMQTVP). A helical membrane pass occupies residues 82-102 (NIFITSLAFGDLLLLLTCVPV). Residues 103-120 (DASRYIVDTWMFGRAGCK) are Extracellular-facing. A disulfide bridge connects residues Cys-119 and Cys-202. A helical transmembrane segment spans residues 121 to 142 (IISFIQLTSVGVSVFTLTVLSA). Residues 143–162 (DRYRAIVKPLQLQTSDAVLK) are Cytoplasmic-facing. The chain crosses the membrane as a helical span at residues 163 to 183 (TCGKAVCVWIISMLLAAPEAV). Over 184 to 219 (FSDLYEFGSSEKNTTFEACAPYPVSEKILQETHSLI) the chain is Extracellular. The helical transmembrane segment at 220-240 (CFLVFYIVPLSIISAYYFLIA) threads the bilayer. Topologically, residues 241-271 (KTLYKSTFNMPAEEHTHARKQIESRKRVAKT) are cytoplasmic. Residues 272-292 (VLVLVALFAVCWLPNHMLYLY) traverse the membrane as a helical segment. At 293–312 (RSFTYHSAVNSSAFHLSATI) the chain is on the extracellular side. The chain crosses the membrane as a helical span at residues 313–332 (FARVLAFSNSCVNPFALYWL). Topologically, residues 333 to 392 (SRSFRQHFKKQVYCCKTEPPASQQSPTHSSTITGITAVKGNIQMSEISITLLSAYDVKKE) are cytoplasmic. Cys-346 carries the S-palmitoyl cysteine lipid modification.

The protein belongs to the G-protein coupled receptor 1 family. Expressed only in brain, primarily in cortex and forebrain and at low levels in the midbrain.

The protein resides in the cell membrane. Its function is as follows. The relative rank potency of bombesin-like peptides for this receptor is [Phe13]bombesin &gt; [Leu13]bombesin &gt; GRP &gt; neuromedin-B. The protein is [Phe13]-bombesin receptor (BB4) of Bombina orientalis (Oriental fire-bellied toad).